The sequence spans 1485 residues: Chromosome partition protein MukB (1485 aa).

Residue 34 to 41 coordinates ATP; that stretch reads GGNGAGKS. Coiled coils occupy residues 311-480 and 519-665; these read EMAR…EAYR and GARL…RLSQ. The flexible hinge stretch occupies residues 666–783; that stretch reads PGGAEDARLI…SLPLFGRAAR (118 aa). Coiled coils occupy residues 832–1115 and 1209–1265; these read NDPE…QAKA and IDAI…LQSV.

Belongs to the SMC family. MukB subfamily. Homodimerization via its hinge domain. Binds to DNA via its C-terminal region. Interacts, and probably forms a ternary complex, with MukE and MukF via its C-terminal region. The complex formation is stimulated by calcium or magnesium. Interacts with tubulin-related protein FtsZ.

Its subcellular location is the cytoplasm. It localises to the nucleoid. Its function is as follows. Plays a central role in chromosome condensation, segregation and cell cycle progression. Functions as a homodimer, which is essential for chromosome partition. Involved in negative DNA supercoiling in vivo, and by this means organize and compact chromosomes. May achieve or facilitate chromosome segregation by condensation DNA from both sides of a centrally located replisome during cell division. The polypeptide is Chromosome partition protein MukB (Edwardsiella ictaluri (strain 93-146)).